The chain runs to 808 residues: Anaphase-promoting complex subunit 4 (808 aa).

Phosphotyrosine is present on tyrosine 469. A phosphoserine mark is found at serine 757 and serine 758. Lysine 772 is covalently cross-linked (Glycyl lysine isopeptide (Lys-Gly) (interchain with G-Cter in SUMO2)). Phosphoserine occurs at positions 777 and 779. Lysine 798 is covalently cross-linked (Glycyl lysine isopeptide (Lys-Gly) (interchain with G-Cter in SUMO2)).

It belongs to the APC4 family. The mammalian APC/C is composed at least of 14 distinct subunits ANAPC1, ANAPC2, CDC27/APC3, ANAPC4, ANAPC5, CDC16/APC6, ANAPC7, CDC23/APC8, ANAPC10, ANAPC11, CDC26/APC12, ANAPC13, ANAPC15 and ANAPC16 that assemble into a complex of at least 19 chains with a combined molecular mass of around 1.2 MDa; APC/C interacts with FZR1 and FBXO5. In the context of the APC/C complex, directly interacts with UBE2S. Interacts with FBXO43.

It localises to the nucleus. It participates in protein modification; protein ubiquitination. In terms of biological role, component of the anaphase promoting complex/cyclosome (APC/C), a cell cycle-regulated E3 ubiquitin ligase that controls progression through mitosis and the G1 phase of the cell cycle. The APC/C complex acts by mediating ubiquitination and subsequent degradation of target proteins: it mainly mediates the formation of 'Lys-11'-linked polyubiquitin chains and, to a lower extent, the formation of 'Lys-48'- and 'Lys-63'-linked polyubiquitin chains. The APC/C complex catalyzes assembly of branched 'Lys-11'-/'Lys-48'-linked branched ubiquitin chains on target proteins. The protein is Anaphase-promoting complex subunit 4 (ANAPC4) of Homo sapiens (Human).